Consider the following 391-residue polypeptide: MTIQTDGKTDVLWFLPTHGDGRYLGASEGARDVSLPYLRQIAQAADDLGYYGVLLPTGRSCEDSWVVASALAPLTQRLRFLVAVRPGLQEPSMAARMAATLDRISDGRLLINVVTGGDPVELKGDGVFLDHDERYVVTDEFLHIWRGLMAGETVNFEGKHLRSENGRVIFRPVQAPYPPLYFGGSSPAGIEVAAEHCEVYLTWGEPPAGVAEKIAKAREAAERKGKTFSYGIRLHVIVRETESEAWEAADRLISRLDDATIAQAQATLKRQDSVGQSRMMALHGGDRNKLVVSPNLWAGVGLVRGGAGTALVGSADQVADRMKEYIDLGIDRFILSGYPHLEEAYRFAELVFPKLPLRATTGTAPSTARNNGPFGEVIANDIVPTRRVSAH.

Belongs to the SsuD family.

It carries out the reaction an alkanesulfonate + FMNH2 + O2 = an aldehyde + FMN + sulfite + H2O + 2 H(+). Its function is as follows. Catalyzes the desulfonation of aliphatic sulfonates. This Methylorubrum extorquens (strain CM4 / NCIMB 13688) (Methylobacterium extorquens) protein is Alkanesulfonate monooxygenase.